The sequence spans 366 residues: Glycine betaine monooxygenase reductase subunit (366 aa).

Positions 16–119 (NGRHLVRCVK…HGPVGLFNAI (104 aa)) constitute an FAD-binding FR-type domain. One can recognise a 2Fe-2S ferredoxin-type domain in the interval 282 to 366 (HQVEFTATGK…VPKGDVVIDY (85 aa)). The [2Fe-2S] cluster site is built by Cys-316, Cys-321, Cys-324, and Cys-354.

This sequence in the N-terminal section; belongs to the FAD-binding oxidoreductase type 6 family. The system is composed of an oxygenase subunit (GbcA) and a reductase subunit (GbcB). The cofactor is FAD. It depends on [2Fe-2S] cluster as a cofactor.

It catalyses the reaction glycine betaine + NADH + O2 + H(+) = N,N-dimethylglycine + formaldehyde + NAD(+) + H2O. Its function is as follows. Involved in degradation of glycine betaine. Part of a Rieske-type oxygenase system that catalyzes the conversion of glycine betaine (GB) to dimethylglycine (DMG). This subunit is the ferredoxin reductase component of the system. Required for growth on choline and GB, but not for growth on DMG. This chain is Glycine betaine monooxygenase reductase subunit, found in Pseudomonas aeruginosa (strain ATCC 15692 / DSM 22644 / CIP 104116 / JCM 14847 / LMG 12228 / 1C / PRS 101 / PAO1).